The primary structure comprises 81 residues: Cytotoxin 4N (81 aa).

Positions 1 to 21 (MKTLLLTLVVVTIVCLDLGYT) are cleaved as a signal peptide. Cystine bridges form between C24-C42, C35-C59, C63-C74, and C75-C80.

The protein belongs to the three-finger toxin family. Short-chain subfamily. Type IA cytotoxin sub-subfamily. In terms of assembly, monomer in solution; Homodimer and oligomer in the presence of negatively charged lipids forming a pore with a size ranging between 20 and 30 Angstroms. Expressed by the venom gland.

Its subcellular location is the secreted. It localises to the target cell membrane. In terms of biological role, shows cytolytic activity on many different cells by forming pore in lipid membranes. In vivo, increases heart rate or kills the animal by cardiac arrest. In addition, it binds to heparin with high affinity, interacts with Kv channel-interacting protein 1 (KCNIP1) in a calcium-independent manner, and binds to integrin alpha-V/beta-3 (ITGAV/ITGB3) with moderate affinity. This is Cytotoxin 4N from Naja atra (Chinese cobra).